A 474-amino-acid chain; its full sequence is MAGKTLYGKLWDIHEVARRDDGSSLIYIDRHILHEVTSPQAFEGLRLAGRPLWRVNANIATPDHNVPTTKAERQGSLLSIADTVSRLQVQTLDENCDDFGIFEFKMNDVRQGIVHVIGPEQGATLPGMTVVCGDSHTSTHGAFGALAHGIGTSEVEHVLATQCLVTQKMKNMQVRVEGTLSWGVTAKDIVLALIGKIGTAGGNGYAVEFSGSTIRALSMEGRMTICNMAIEAGARVGMVAVDEKTIQYVHGRPFAPKGSDWDAAVAFWRGLVSDPDAHFDRVVELSAEEIKPQVTWGTSPEMVSAVDQSVPDPERETDPVKKESLIRALKYMGLQPNDPITSIKLDRVFIGSCTNSRIEDLRAAAEVVKGRKVASTVKQAMVVPGSGLVKAQAEVEGLDKIFIEAGFEWREPGCSMCLAMNPDKLGSGEHCASTSNRNFEGRQGIGGRTHLVSPAMAAAAAVAGHFVDVREMMR.

Positions 353, 414, and 417 each coordinate [4Fe-4S] cluster.

Belongs to the aconitase/IPM isomerase family. LeuC type 1 subfamily. Heterodimer of LeuC and LeuD. [4Fe-4S] cluster is required as a cofactor.

It carries out the reaction (2R,3S)-3-isopropylmalate = (2S)-2-isopropylmalate. Its pathway is amino-acid biosynthesis; L-leucine biosynthesis; L-leucine from 3-methyl-2-oxobutanoate: step 2/4. Functionally, catalyzes the isomerization between 2-isopropylmalate and 3-isopropylmalate, via the formation of 2-isopropylmaleate. The protein is 3-isopropylmalate dehydratase large subunit of Xylella fastidiosa (strain M12).